The chain runs to 344 residues: Dihydroorotase (344 aa).

The Zn(2+) site is built by His13 and His15. Residues 15–17 (HLR) and Asn41 each bind substrate. 3 residues coordinate Zn(2+): Lys99, His136, and His174. The residue at position 99 (Lys99) is an N6-carboxylysine. His136 is a binding site for substrate. Leu219 provides a ligand contact to substrate. Residue Asp247 participates in Zn(2+) binding. Residue Asp247 is part of the active site. Positions 251 and 263 each coordinate substrate.

The protein belongs to the metallo-dependent hydrolases superfamily. DHOase family. Class II DHOase subfamily. Homodimer. Requires Zn(2+) as cofactor.

It carries out the reaction (S)-dihydroorotate + H2O = N-carbamoyl-L-aspartate + H(+). It functions in the pathway pyrimidine metabolism; UMP biosynthesis via de novo pathway; (S)-dihydroorotate from bicarbonate: step 3/3. In terms of biological role, catalyzes the reversible cyclization of carbamoyl aspartate to dihydroorotate. The chain is Dihydroorotase from Idiomarina loihiensis (strain ATCC BAA-735 / DSM 15497 / L2-TR).